The chain runs to 1059 residues: Ceruloplasmin (1059 aa).

Residues 1-19 form the signal peptide; it reads MKFLLLSALLFLHSSLAWT. Plastocyanin-like domains are found at residues 20–199, 208–356, 369–554, 564–712, 724–894, and 902–1055; these read REKH…LILC, KEEN…VRDC, HVRH…MKIC, RQKD…VNQC, GERT…LIVC, and FNPK…PNQE. Na(+) contacts are provided by Tyr-55, Gly-64, and Tyr-67. The Cu(2+) site is built by His-120 and His-122. His-120 provides a ligand contact to O2. Lys-128 serves as a coordination point for Ca(2+). An N-linked (GlcNAc...) asparagine glycan is attached at Asn-138. The Ca(2+) site is built by Gln-143, Asp-146, and Asp-147. Residues Cys-173 and Cys-199 are joined by a disulfide bond. Residues His-179 and His-181 each contribute to the Cu(2+) site. His-179 contributes to the O2 binding site. Asn-226 is a glycosylation site (N-linked (GlcNAc...) asparagine). Ser-255 provides a ligand contact to Na(+). Cys-275 and Cys-356 are disulfide-bonded. Cu(2+)-binding residues include His-294, Cys-337, and His-342. Asn-396 is a glycosylation site (N-linked (GlcNAc...) asparagine). Residues Phe-407, Gly-416, and Tyr-419 each coordinate Na(+). Cys-528 and Cys-554 are disulfide-bonded. An N-linked (GlcNAc...) asparagine glycan is attached at Asn-582. Na(+) is bound at residue Ser-611. Cysteines 631 and 712 form a disulfide. His-650, Cys-693, His-698, and Met-703 together coordinate Cu(2+). Cys-693 serves as the catalytic Nucleophile; for glutathione peroxidase activity. Residue Asn-756 is glycosylated (N-linked (GlcNAc...) asparagine). Phe-761, Gly-770, and Tyr-773 together coordinate Na(+). The cysteines at positions 868 and 894 are disulfide-linked. Residue Asn-920 is glycosylated (N-linked (GlcNAc...) asparagine). Ser-949 contributes to the Na(+) binding site. Positions 988, 991, 993, 1033, 1034, 1035, 1039, and 1044 each coordinate Cu(2+). O2 is bound by residues His-991 and His-993. O2 is bound at residue His-1035.

This sequence belongs to the multicopper oxidase family. Found in a complex with MPO and LTF; interacts directly with MPO and LTF, which allows Fe(3+) incorporation into LTF, activation of CP ferroxidase activity and protection of CP antioxidant properties by MPO. The cofactor is Cu(2+). Synthesized in liver and secreted into the plasma. Also choroid plexus, yolk sac, placenta, and testis; not in stomach and small intestine. Fetal lung and liver.

It localises to the secreted. The enzyme catalyses 4 Fe(2+) + O2 + 4 H(+) = 4 Fe(3+) + 2 H2O. It carries out the reaction 4 Cu(+) + O2 + 4 H(+) = 4 Cu(2+) + 2 H2O. The catalysed reaction is a hydroperoxide + 2 glutathione = an alcohol + glutathione disulfide + H2O. It catalyses the reaction 4 nitric oxide + O2 + 2 H2O = 4 nitrite + 4 H(+). The enzyme catalyses 2 glutathione + H2O2 = glutathione disulfide + 2 H2O. In terms of biological role, multifunctional blue, copper-binding (6-7 atoms per molecule) glycoprotein. It has ferroxidase activity oxidizing Fe(2+) to Fe(3+) without releasing radical oxygen species. It is involved in iron transport across the cell membrane. Copper ions provide a large number of enzymatic activites. Oxidizes highly toxic ferrous ions to the ferric state for further incorporation onto apo-transferrins, catalyzes Cu(+) oxidation and promotes the oxidation of biogenic amines such as norepinephrin and serotonin. Provides Cu(2+) ions for the ascorbate-mediated deaminase degradation of the heparan sulfate chains of GPC1. Has glutathione peroxidase-like activity, can remove both hydrogen peroxide and lipid hydroperoxide in the presence of thiols. Also shows NO-oxidase and NO2 synthase activities that determine endocrine NO homeostasis. This is Ceruloplasmin (Cp) from Rattus norvegicus (Rat).